We begin with the raw amino-acid sequence, 255 residues long: NAD-dependent protein deacylase (255 aa).

The Deacetylase sirtuin-type domain maps to 1–252 (MPKLVVFSGA…AEIEQELEQF (252 aa)). 9–28 (GAGLSAESGLETFRDNGGLW) serves as a coordination point for NAD(+). Residues tyrosine 53 and arginine 56 each coordinate substrate. 103 to 106 (QNVD) contributes to the NAD(+) binding site. The Proton acceptor role is filled by histidine 121. 4 residues coordinate Zn(2+): cysteine 129, cysteine 132, cysteine 148, and cysteine 151. NAD(+) contacts are provided by residues 190–192 (GTS), 218–220 (NLQ), and threonine 238.

This sequence belongs to the sirtuin family. Class III subfamily. Requires Zn(2+) as cofactor.

It localises to the cytoplasm. It catalyses the reaction N(6)-acetyl-L-lysyl-[protein] + NAD(+) + H2O = 2''-O-acetyl-ADP-D-ribose + nicotinamide + L-lysyl-[protein]. It carries out the reaction N(6)-succinyl-L-lysyl-[protein] + NAD(+) + H2O = 2''-O-succinyl-ADP-D-ribose + nicotinamide + L-lysyl-[protein]. In terms of biological role, NAD-dependent lysine deacetylase and desuccinylase that specifically removes acetyl and succinyl groups on target proteins. Modulates the activities of several proteins which are inactive in their acylated form. The polypeptide is NAD-dependent protein deacylase (Helicobacter hepaticus (strain ATCC 51449 / 3B1)).